A 212-amino-acid chain; its full sequence is Thymidylate kinase (212 aa).

9 to 16 (GIDGCGKT) contributes to the ATP binding site.

Belongs to the thymidylate kinase family.

It carries out the reaction dTMP + ATP = dTDP + ADP. Its function is as follows. Phosphorylation of dTMP to form dTDP in both de novo and salvage pathways of dTTP synthesis. This is Thymidylate kinase from Synechococcus sp. (strain CC9311).